Reading from the N-terminus, the 568-residue chain is Type 3 secretion system secretin (568 aa).

The first 15 residues, 1-15 (MAAALLLWTAGTVCA), serve as a signal peptide directing secretion. The tract at residues 203–292 (YGGDGPSDSG…RGSTPIIRAD (90 aa)) is disordered. The segment covering 243–257 (LGGGKSPLPPGGTGQ) has biased composition (gly residues). Residues 273–284 (NRLRSDELDDRG) are compositionally biased toward basic and acidic residues.

It belongs to the bacterial secretin family. T3SS SctC subfamily. The core secretion machinery of the T3SS is composed of approximately 20 different proteins, including cytoplasmic components, a base, an export apparatus and a needle. This subunit is part of the base, which anchors the injectisome in the bacterial cell envelope. Forms a stable homooligomeric complex.

Its subcellular location is the cell outer membrane. Its function is as follows. Component of the type III secretion system (T3SS), also called injectisome, which is used to inject bacterial effector proteins into eukaryotic host cells. Forms a ring-shaped multimeric structure with an apparent central pore in the outer membrane. The polypeptide is Type 3 secretion system secretin (Ralstonia nicotianae (strain ATCC BAA-1114 / GMI1000) (Ralstonia solanacearum)).